The following is a 72-amino-acid chain: Sec-independent protein translocase protein TatA (72 aa).

The chain crosses the membrane as a helical span at residues 1–21 (MAGLSIWHVVIFAIVVILLFG). The disordered stretch occupies residues 47 to 72 (DEAASLNSPRTIDAQVKTSESTSVKS). A compositionally biased stretch (polar residues) spans 51–72 (SLNSPRTIDAQVKTSESTSVKS).

This sequence belongs to the TatA/E family. As to quaternary structure, the Tat system comprises two distinct complexes: a TatABC complex, containing multiple copies of TatA, TatB and TatC subunits, and a separate TatA complex, containing only TatA subunits. Substrates initially bind to the TatABC complex, which probably triggers association of the separate TatA complex to form the active translocon.

The protein resides in the cell inner membrane. In terms of biological role, part of the twin-arginine translocation (Tat) system that transports large folded proteins containing a characteristic twin-arginine motif in their signal peptide across membranes. TatA could form the protein-conducting channel of the Tat system. In Acinetobacter baumannii (strain AB307-0294), this protein is Sec-independent protein translocase protein TatA.